The sequence spans 416 residues: Tyrosine--tRNA ligase (416 aa).

Tyr40 contacts L-tyrosine. The short motif at 45 to 54 is the 'HIGH' region element; the sequence is ATAKSLHVGS. Residues Tyr177 and Gln181 each contribute to the L-tyrosine site. A 'KMSKS' region motif is present at residues 237–241; it reads KMGKS. ATP is bound at residue Lys240. An S4 RNA-binding domain is found at 351 to 415; sequence ISIVQLIVKS…GKKRHAMVQL (65 aa).

The protein belongs to the class-I aminoacyl-tRNA synthetase family. TyrS type 1 subfamily. In terms of assembly, homodimer.

It is found in the cytoplasm. The catalysed reaction is tRNA(Tyr) + L-tyrosine + ATP = L-tyrosyl-tRNA(Tyr) + AMP + diphosphate + H(+). Its function is as follows. Catalyzes the attachment of tyrosine to tRNA(Tyr) in a two-step reaction: tyrosine is first activated by ATP to form Tyr-AMP and then transferred to the acceptor end of tRNA(Tyr). In Roseobacter denitrificans (strain ATCC 33942 / OCh 114) (Erythrobacter sp. (strain OCh 114)), this protein is Tyrosine--tRNA ligase.